The following is a 96-amino-acid chain: Large ribosomal subunit protein eL21 (96 aa).

The disordered stretch occupies residues 1–37 (MPSSNGPMTGTRDKLSNSPRERGMSPPQRAIQEYDEG). Over residues 11-23 (TRDKLSNSPRERG) the composition is skewed to basic and acidic residues.

The protein belongs to the eukaryotic ribosomal protein eL21 family.

The polypeptide is Large ribosomal subunit protein eL21 (Haloquadratum walsbyi (strain DSM 16790 / HBSQ001)).